A 227-amino-acid polypeptide reads, in one-letter code: UPF0173 metal-dependent hydrolase BCE33L4354 (227 aa).

Belongs to the UPF0173 family.

The sequence is that of UPF0173 metal-dependent hydrolase BCE33L4354 from Bacillus cereus (strain ZK / E33L).